Consider the following 280-residue polypeptide: Ribosomal RNA-processing protein 7 homolog A (280 aa).

Over residues 1 to 10 (MVSRRKKRKA) the composition is skewed to basic residues. Positions 1–24 (MVSRRKKRKAGGHEESIPSPPGYS) are disordered. The 101-residue stretch at 59–159 (RTLFILNVPP…SGIHKWISDY (101 aa)) folds into the RRM domain. Position 99 is a phosphoserine (serine 99).

This sequence belongs to the RRP7 family. Part of the small subunit (SSU) processome, composed of more than 70 proteins and the RNA chaperone small nucleolar RNA (snoRNA) U3. Interacts with NOL6; required for NOL6 localization to nucleolus.

It localises to the nucleus. It is found in the nucleolus. The protein resides in the cell projection. The protein localises to the cilium. Its subcellular location is the cytoplasm. It localises to the cytoskeleton. It is found in the microtubule organizing center. The protein resides in the centrosome. Functionally, nucleolar protein that is involved in ribosomal RNA (rRNA) processing. Also plays a role in primary cilia resorption, and cell cycle progression in neurogenesis and neocortex development. Part of the small subunit (SSU) processome, first precursor of the small eukaryotic ribosomal subunit. During the assembly of the SSU processome in the nucleolus, many ribosome biogenesis factors, an RNA chaperone and ribosomal proteins associate with the nascent pre-rRNA and work in concert to generate RNA folding, modifications, rearrangements and cleavage as well as targeted degradation of pre-ribosomal RNA by the RNA exosome. This is Ribosomal RNA-processing protein 7 homolog A (Rrp7a) from Mus musculus (Mouse).